Here is a 297-residue protein sequence, read N- to C-terminus: Cyclin-dependent kinase 1 (297 aa).

N-acetylmethionine is present on Met1. Tyr4 carries the phosphotyrosine; by PKR modification. Residues 4-287 enclose the Protein kinase domain; that stretch reads YIKIEKIGEG…GKMALKHPYF (284 aa). N6-acetyllysine; alternate occurs at positions 6 and 9. Glycyl lysine isopeptide (Lys-Gly) (interchain with G-Cter in SUMO2); alternate cross-links involve residues Lys6 and Lys9. 10 to 18 contributes to the ATP binding site; it reads IGEGTYGVV. Thr14 bears the Phosphothreonine; by PKMYT1 mark. Position 15 is a phosphotyrosine; by PKMYT1, WEE1, WEE2 and PKC/PRKCD (Tyr15). Residue Tyr15 is modified to Phosphotyrosine; by WEE1 and WEE2. Tyr19 bears the Phosphotyrosine mark. Lys20 participates in a covalent cross-link: Glycyl lysine isopeptide (Lys-Gly) (interchain with G-Cter in SUMO2). Residue Lys33 participates in ATP binding. At Ser39 the chain carries Phosphoserine. A Phosphotyrosine modification is found at Tyr77. Catalysis depends on Asp128, which acts as the Proton acceptor. A Glycyl lysine isopeptide (Lys-Gly) (interchain with G-Cter in SUMO2) cross-link involves residue Lys139. Phosphothreonine is present on Thr141. Thr161 bears the Phosphothreonine; by CAK mark. Ser178 carries the phosphoserine modification. Thr222 is subject to Phosphothreonine. Lys245 is subject to N6-succinyllysine. Position 248 is a phosphoserine (Ser248).

It belongs to the protein kinase superfamily. CMGC Ser/Thr protein kinase family. CDC2/CDKX subfamily. In terms of assembly, forms a stable but non-covalent complex with a regulatory subunit and with a cyclin. Interacts with cyclins-B (CCNB1, CCNB2 and CCNB3) to form a serine/threonine kinase holoenzyme complex also known as maturation promoting factor (MPF). The cyclin subunit imparts substrate specificity to the complex. Can also form CDK1-cylin-D and CDK1-cyclin-E complexes that phosphorylate RB1 in vitro. Binds to RB1 and other transcription factors such as FOXO1 and RUNX2. Promotes G2-M transition when in complex with a cyclin-B. Interacts with DLGAP5. Binds to the CDK inhibitors CDKN1A/p21 and CDKN1B/p27. Isoform 2 is unable to complex with cyclin-B1 and also fails to bind to CDKN1A/p21. Interacts with catalytically active CCNB1 and RALBP1 during mitosis to form an endocytotic complex during interphase. Associates with cyclins-A and B1 during S-phase in regenerating hepatocytes. Interacts with FANCC. Interacts with CEP63; this interaction recruits CDK1 to centrosomes. Interacts with CENPA. Interacts with NR1D1. Interacts with proteasome subunit PSMA8; to participate in meiosis progression during spermatogenesis. Phosphorylation at Thr-161 by CAK/CDK7 activates kinase activity. Phosphorylation at Thr-14 and Tyr-15 by PKMYT1 prevents nuclear translocation. Phosphorylation at Tyr-15 by WEE1 and WEE2 inhibits the protein kinase activity and acts as a negative regulator of entry into mitosis (G2 to M transition). Phosphorylation by PKMYT1 and WEE1 takes place during mitosis to keep CDK1-cyclin-B complexes inactive until the end of G2. By the end of G2, PKMYT1 and WEE1 are inactivated, but CDC25A and CDC25B are activated. Dephosphorylation by active CDC25A and CDC25B at Thr-14 and Tyr-15, leads to CDK1 activation at the G2-M transition. Phosphorylation at Tyr-15 by WEE2 during oogenesis is required to maintain meiotic arrest in oocytes during the germinal vesicle (GV) stage, a long period of quiescence at dictyate prophase I, leading to prevent meiotic reentry. Phosphorylation by WEE2 is also required for metaphase II exit during egg activation to ensure exit from meiosis in oocytes and promote pronuclear formation. Phosphorylated at Tyr-4 by PKR/EIF2AK2 upon genotoxic stress. This phosphorylation triggers CDK1 polyubiquitination and subsequent proteolysis, thus leading to G2 arrest. In response to UV irradiation, phosphorylation at Tyr-15 by PRKCD activates the G2/M DNA damage checkpoint. In terms of processing, polyubiquitinated upon genotoxic stress.

It localises to the nucleus. Its subcellular location is the cytoplasm. The protein resides in the mitochondrion. The protein localises to the cytoskeleton. It is found in the microtubule organizing center. It localises to the centrosome. Its subcellular location is the spindle. It catalyses the reaction L-seryl-[protein] + ATP = O-phospho-L-seryl-[protein] + ADP + H(+). It carries out the reaction L-threonyl-[protein] + ATP = O-phospho-L-threonyl-[protein] + ADP + H(+). The catalysed reaction is [DNA-directed RNA polymerase] + ATP = phospho-[DNA-directed RNA polymerase] + ADP + H(+). Its activity is regulated as follows. Phosphorylation at Thr-14 or Tyr-15 inactivates the enzyme, while phosphorylation at Thr-161 activates it. Activated through a multistep process; binding to cyclin-B is required for relocation of cyclin-kinase complexes to the nucleus, activated by CAK/CDK7-mediated phosphorylation on Thr-161, and CDC25-mediated dephosphorylation of inhibitory phosphorylation on Thr-14 and Tyr-15. Activity is restricted during S-phase in an ATR-dependent manner to prevent premature entry into G2. Repressed by the CDK inhibitors CDKN1A/p21 and CDKN1B/p27 during the G1 phase and by CDKN1A/p21 at the G1-S checkpoint upon DNA damage. Transient activation by rapid and transient dephosphorylation at Tyr-15 triggered by TGFB1. Its function is as follows. Plays a key role in the control of the eukaryotic cell cycle by modulating the centrosome cycle as well as mitotic onset; promotes G2-M transition via association with multiple interphase cyclins. Phosphorylates PARVA/actopaxin, APC, AMPH, APC, BARD1, Bcl-xL/BCL2L1, BRCA2, CALD1, CASP8, CDC7, CDC20, CDC25A, CDC25C, CC2D1A, CENPA, CSNK2 proteins/CKII, FZR1/CDH1, CDK7, CEBPB, CHAMP1, DMD/dystrophin, EEF1 proteins/EF-1, EZH2, KIF11/EG5, EGFR, FANCG, FOS, GFAP, GOLGA2/GM130, GRASP1, UBE2A/hHR6A, HIST1H1 proteins/histone H1, HMGA1, HIVEP3/KRC, KAT5, LMNA, LMNB, LBR, MKI67, LATS1, MAP1B, MAP4, MARCKS, MCM2, MCM4, MKLP1, MLST8, MYB, NEFH, NFIC, NPC/nuclear pore complex, PITPNM1/NIR2, NPM1, NCL, NUCKS1, NPM1/numatrin, ORC1, PRKAR2A, EEF1E1/p18, EIF3F/p47, p53/TP53, NONO/p54NRB, PAPOLA, PLEC/plectin, RB1, TPPP, UL40/R2, RAB4A, RAP1GAP, RBBP8/CtIP, RCC1, RPS6KB1/S6K1, KHDRBS1/SAM68, ESPL1, SKI, BIRC5/survivin, STIP1, TEX14, beta-tubulins, MAPT/TAU, NEDD1, VIM/vimentin, TK1, FOXO1, RUNX1/AML1, SAMHD1, SIRT2, CGAS, ZAR1 and RUNX2. CDK1/CDC2-cyclin-B controls pronuclear union in interphase fertilized eggs. Essential for early stages of embryonic development. During G2 and early mitosis, CDC25A/B/C-mediated dephosphorylation activates CDK1/cyclin complexes which phosphorylate several substrates that trigger at least centrosome separation, Golgi dynamics, nuclear envelope breakdown and chromosome condensation. Once chromosomes are condensed and aligned at the metaphase plate, CDK1 activity is switched off by WEE1- and PKMYT1-mediated phosphorylation to allow sister chromatid separation, chromosome decondensation, reformation of the nuclear envelope and cytokinesis. Phosphorylates KRT5 during prometaphase and metaphase. Inactivated by PKR/EIF2AK2- and WEE1-mediated phosphorylation upon DNA damage to stop cell cycle and genome replication at the G2 checkpoint thus facilitating DNA repair. Reactivated after successful DNA repair through WIP1-dependent signaling leading to CDC25A/B/C-mediated dephosphorylation and restoring cell cycle progression. Catalyzes lamin (LMNA, LMNB1 and LMNB2) phosphorylation at the onset of mitosis, promoting nuclear envelope breakdown. In proliferating cells, CDK1-mediated FOXO1 phosphorylation at the G2-M phase represses FOXO1 interaction with 14-3-3 proteins and thereby promotes FOXO1 nuclear accumulation and transcription factor activity, leading to cell death of postmitotic neurons. The phosphorylation of beta-tubulins regulates microtubule dynamics during mitosis. NEDD1 phosphorylation promotes PLK1-mediated NEDD1 phosphorylation and subsequent targeting of the gamma-tubulin ring complex (gTuRC) to the centrosome, an important step for spindle formation. In addition, CC2D1A phosphorylation regulates CC2D1A spindle pole localization and association with SCC1/RAD21 and centriole cohesion during mitosis. The phosphorylation of Bcl-xL/BCL2L1 after prolongated G2 arrest upon DNA damage triggers apoptosis. In contrast, CASP8 phosphorylation during mitosis prevents its activation by proteolysis and subsequent apoptosis. This phosphorylation occurs in cancer cell lines, as well as in primary breast tissues and lymphocytes. EZH2 phosphorylation promotes H3K27me3 maintenance and epigenetic gene silencing. CALD1 phosphorylation promotes Schwann cell migration during peripheral nerve regeneration. CDK1-cyclin-B complex phosphorylates NCKAP5L and mediates its dissociation from centrosomes during mitosis. Regulates the amplitude of the cyclic expression of the core clock gene BMAL1 by phosphorylating its transcriptional repressor NR1D1, and this phosphorylation is necessary for SCF(FBXW7)-mediated ubiquitination and proteasomal degradation of NR1D1. Phosphorylates EML3 at 'Thr-881' which is essential for its interaction with HAUS augmin-like complex and TUBG1. Phosphorylates CGAS during mitosis, leading to its inhibition, thereby preventing CGAS activation by self DNA during mitosis. Phosphorylates SKA3 during mitosis which promotes SKA3 binding to the NDC80 complex and anchoring of the SKA complex to kinetochores, to enable stable attachment of mitotic spindle microtubules to kinetochores. This chain is Cyclin-dependent kinase 1 (Cdk1), found in Rattus norvegicus (Rat).